Consider the following 325-residue polypeptide: Probable isoaspartyl peptidase/L-asparaginase 2 (325 aa).

The active-site Nucleophile is the threonine 195. Substrate contacts are provided by residues 223 to 226 (RIGD) and 245 to 248 (TGEG).

Belongs to the Ntn-hydrolase family. In terms of assembly, heterotetramer of two alpha and two beta chains arranged as a dimer of alpha/beta heterodimers. Cleaved into an alpha and beta chain by autocatalysis; this activates the enzyme. The N-terminal residue of the beta subunit is responsible for the nucleophile hydrolase activity.

It carries out the reaction Cleavage of a beta-linked Asp residue from the N-terminus of a polypeptide.. Functionally, acts in asparagine catabolism and also in the final steps of protein degradation via hydrolysis of a range of isoaspartyl dipeptides. The protein is Probable isoaspartyl peptidase/L-asparaginase 2 of Arabidopsis thaliana (Mouse-ear cress).